Reading from the N-terminus, the 366-residue chain is ERCC4 domain-containing protein EP364R (366 aa).

One can recognise an ERCC4 domain in the interval Phe-3–Ala-101.

Belongs to the asfivirus EP364R family.

Functionally, plays a role in the inhibition of type I interferon signaling pathway. Mechanistically, specifically interacts with 2',3'-cGAMP and cleaves it via its phosphodiesterase activity. In turn, prevents 2',3'-cGAMP interaction with host ER-resident STING1 leading to inhibition of downstream signaling pathway and type I interferon production. This chain is ERCC4 domain-containing protein EP364R, found in African swine fever virus (isolate Pig/Kenya/KEN-50/1950) (ASFV).